A 722-amino-acid chain; its full sequence is Polyribonucleotide nucleotidyltransferase (722 aa).

The Mg(2+) site is built by Asp-487 and Asp-493. The region spanning Pro-554–Ile-613 is the KH domain. The S1 motif domain occupies Gly-623–Lys-691. The segment at Lys-691 to Glu-722 is disordered. Basic and acidic residues predominate over residues Leu-701–Asp-713.

Belongs to the polyribonucleotide nucleotidyltransferase family. The cofactor is Mg(2+).

The protein localises to the cytoplasm. The enzyme catalyses RNA(n+1) + phosphate = RNA(n) + a ribonucleoside 5'-diphosphate. Its function is as follows. Involved in mRNA degradation. Catalyzes the phosphorolysis of single-stranded polyribonucleotides processively in the 3'- to 5'-direction. This is Polyribonucleotide nucleotidyltransferase from Rhodopseudomonas palustris (strain BisB5).